A 254-amino-acid polypeptide reads, in one-letter code: Imidazole glycerol phosphate synthase subunit HisF (254 aa).

Active-site residues include aspartate 11 and aspartate 130.

This sequence belongs to the HisA/HisF family. Heterodimer of HisH and HisF.

Its subcellular location is the cytoplasm. It carries out the reaction 5-[(5-phospho-1-deoxy-D-ribulos-1-ylimino)methylamino]-1-(5-phospho-beta-D-ribosyl)imidazole-4-carboxamide + L-glutamine = D-erythro-1-(imidazol-4-yl)glycerol 3-phosphate + 5-amino-1-(5-phospho-beta-D-ribosyl)imidazole-4-carboxamide + L-glutamate + H(+). It participates in amino-acid biosynthesis; L-histidine biosynthesis; L-histidine from 5-phospho-alpha-D-ribose 1-diphosphate: step 5/9. Its function is as follows. IGPS catalyzes the conversion of PRFAR and glutamine to IGP, AICAR and glutamate. The HisF subunit catalyzes the cyclization activity that produces IGP and AICAR from PRFAR using the ammonia provided by the HisH subunit. This Staphylococcus carnosus (strain TM300) protein is Imidazole glycerol phosphate synthase subunit HisF.